We begin with the raw amino-acid sequence, 122 residues long: MIQMQSTLEVACNSGARRVQCIKVLGGSHRRYAGIGDVIKVSVKEAIPRGKAKKGDVYNAVVVRTKKGVRRPDGSVIRFDRNAAVLLNANLAPIGTRIFGPVTRELRTERFMKIVSLAPEVL.

It belongs to the universal ribosomal protein uL14 family. Part of the 50S ribosomal subunit. Forms a cluster with proteins L3 and L19. In the 70S ribosome, L14 and L19 interact and together make contacts with the 16S rRNA in bridges B5 and B8.

Its function is as follows. Binds to 23S rRNA. Forms part of two intersubunit bridges in the 70S ribosome. This chain is Large ribosomal subunit protein uL14, found in Shewanella halifaxensis (strain HAW-EB4).